A 295-amino-acid polypeptide reads, in one-letter code: Pyridoxal 5'-phosphate synthase subunit PdxS (295 aa).

Asp25 contacts D-ribose 5-phosphate. The active-site Schiff-base intermediate with D-ribose 5-phosphate is the Lys82. D-ribose 5-phosphate is bound at residue Gly154. D-glyceraldehyde 3-phosphate is bound at residue Arg166. D-ribose 5-phosphate-binding positions include Gly215 and 236 to 237; that span reads GS.

This sequence belongs to the PdxS/SNZ family. In the presence of PdxT, forms a dodecamer of heterodimers.

It catalyses the reaction aldehydo-D-ribose 5-phosphate + D-glyceraldehyde 3-phosphate + L-glutamine = pyridoxal 5'-phosphate + L-glutamate + phosphate + 3 H2O + H(+). It participates in cofactor biosynthesis; pyridoxal 5'-phosphate biosynthesis. In terms of biological role, catalyzes the formation of pyridoxal 5'-phosphate from ribose 5-phosphate (RBP), glyceraldehyde 3-phosphate (G3P) and ammonia. The ammonia is provided by the PdxT subunit. Can also use ribulose 5-phosphate and dihydroxyacetone phosphate as substrates, resulting from enzyme-catalyzed isomerization of RBP and G3P, respectively. The chain is Pyridoxal 5'-phosphate synthase subunit PdxS from Bacillus cereus (strain B4264).